The sequence spans 121 residues: Probable intron-encoded DNA endonuclease aI1 (121 aa).

Belongs to the LAGLIDADG endonuclease family.

The protein resides in the mitochondrion. Functionally, mitochondrial DNA endonuclease involved in intron homing. The chain is Probable intron-encoded DNA endonuclease aI1 (aI1) from Mycosarcoma maydis (Corn smut fungus).